The primary structure comprises 83 residues: Sec-independent protein translocase protein TatA (83 aa).

A helical membrane pass occupies residues 1 to 21 (MGGLSLPHLIVLALVVLILFG). A disordered region spans residues 34 to 83 (KGIKSFKQGMNDEDSKPVTPPPAQIPPASLQQTPPPAQPAPQPTSTDQAQ). Residues 66–75 (TPPPAQPAPQ) are compositionally biased toward pro residues.

Belongs to the TatA/E family. As to quaternary structure, the Tat system comprises two distinct complexes: a TatABC complex, containing multiple copies of TatA, TatB and TatC subunits, and a separate TatA complex, containing only TatA subunits. Substrates initially bind to the TatABC complex, which probably triggers association of the separate TatA complex to form the active translocon.

The protein resides in the cell inner membrane. Part of the twin-arginine translocation (Tat) system that transports large folded proteins containing a characteristic twin-arginine motif in their signal peptide across membranes. TatA could form the protein-conducting channel of the Tat system. This is Sec-independent protein translocase protein TatA from Novosphingobium aromaticivorans (strain ATCC 700278 / DSM 12444 / CCUG 56034 / CIP 105152 / NBRC 16084 / F199).